The chain runs to 409 residues: Single Ig IL-1-related receptor (409 aa).

Topologically, residues 1-117 are extracellular; the sequence is MAGVCDMAPN…TLWRAGPAGH (117 aa). An Ig-like C2-type domain is found at 9 to 108; that stretch reads PNFLSPSEDQ…VWNVSSHSFT (100 aa). N-linked (GlcNAc...) asparagine glycans are attached at residues N31, N58, N73, N85, and N101. Cysteines 32 and 97 form a disulfide. A helical; Signal-anchor for type III membrane protein transmembrane segment spans residues 118-138; the sequence is VAAVLASLLVLVVLLLVALLY. The Cytoplasmic segment spans residues 139–409; the sequence is VKCRLNMLLW…FYCLVSEDDV (271 aa). The region spanning 162–306 is the TIR domain; it reads KLYDAYVSYS…DFWKELQLAL (145 aa). A Phosphoserine modification is found at S382.

This sequence belongs to the interleukin-1 receptor family. In terms of assembly, interacts with IL1R1, IRAK1, TLR4, TLR5, TLR9 and TRAF6. Upon IL-1 stimulation found in a complex at least composed of IL1R1, SIGIRR, MYD88, IRAK1 and TRAF6. Upon stimulation with LPC found in a complex at least composed of TLR4, SIG1IR, MYD88, IRAK1 and TRAF6. Interacts with PALM3. Expressed at high levels in kidney, and at moderate levels in colon, small intestine, lung, spleen and liver. Not expressed in brain and muscle. Expressed at high levels in epithelial cells, at moderate levels in splenocytes, and at low or undetectable levels in fibroblasts or endothelial cells. Expressed in mucosal and dendritic cells.

The protein localises to the membrane. Acts as a negative regulator of the Toll-like and IL-1R receptor signaling pathways. Attenuates the recruitment of receptor-proximal signaling components to the TLR4 receptor, probably through an TIR-TIR domain interaction with TLR4. Through its extracellular domain interferes with the heterodimerization of Il1R1 and IL1RAP. The sequence is that of Single Ig IL-1-related receptor (Sigirr) from Mus musculus (Mouse).